A 339-amino-acid chain; its full sequence is Uracil nucleotide/cysteinyl leukotriene receptor (339 aa).

At 1–36 the chain is on the extracellular side; the sequence is MNGLEAALPSLTDNSSLAYSEQCGQETPLENMLFAC. An N-linked (GlcNAc...) asparagine glycan is attached at asparagine 14. A helical transmembrane segment spans residues 37-57; the sequence is FYLLDFILAFVGNALALWLFI. At 58 to 64 the chain is on the cytoplasmic side; that stretch reads WDHKSGT. The helical transmembrane segment at 65-85 threads the bilayer; that stretch reads PANVFLMHLAVADLSCVLVLP. The Extracellular segment spans residues 86–105; the sequence is TRLVYHFSGNHWPFGEIPCR. Cysteine 104 and cysteine 181 form a disulfide bridge. A helical membrane pass occupies residues 106–126; the sequence is LTGFLFYLNMYASIYFLTCIS. Over 127-147 the chain is Cytoplasmic; the sequence is ADRFLAIVHPVKSLKLRRPLY. Residues 148-168 form a helical membrane-spanning segment; that stretch reads AHLACAFLWIVVAVAMAPLLV. Over 169-195 the chain is Extracellular; that stretch reads SPQTVQTNHTVVCLQLYREKASHHALA. Asparagine 176 is a glycosylation site (N-linked (GlcNAc...) asparagine). Residues 196 to 216 form a helical membrane-spanning segment; that stretch reads SLAVAFTFPFITTVTCYLLII. Residues 217 to 232 lie on the Cytoplasmic side of the membrane; that stretch reads RSLRQGPRIEKHLKNK. Residues 233 to 253 traverse the membrane as a helical segment; that stretch reads AVRMIAMVLAIFLICFVPYHI. Residues 254-280 lie on the Extracellular side of the membrane; sequence HRSVYVLHYRGGGTSCAAQRALALGNR. Residues 281–301 traverse the membrane as a helical segment; it reads ITSCLTSLNGALDPVMYFFVA. At 302-339 the chain is on the cytoplasmic side; it reads EKFRHALCNLLCSKRLTGPPPSFEGKTNESSLSARSEL.

Belongs to the G-protein coupled receptor 1 family.

The protein resides in the cell membrane. Dual specificity receptor for uracil nucleotides and cysteinyl leukotrienes (CysLTs). Signals through G(i) and inhibition of adenylyl cyclase. May mediate brain damage by nucleotides and CysLTs following ischemia. The sequence is that of Uracil nucleotide/cysteinyl leukotriene receptor from Mus musculus (Mouse).